We begin with the raw amino-acid sequence, 618 residues long: UvrABC system protein C (618 aa).

One can recognise a GIY-YIG domain in the interval 13-92 (DKPGVYLMKN…IKKYRPKYNI (80 aa)). A UVR domain is found at 204 to 239 (LDIVENFKLNMEKAAENLEFEKAAMLRDKINIIEKI).

The protein belongs to the UvrC family. In terms of assembly, interacts with UvrB in an incision complex.

It localises to the cytoplasm. Functionally, the UvrABC repair system catalyzes the recognition and processing of DNA lesions. UvrC both incises the 5' and 3' sides of the lesion. The N-terminal half is responsible for the 3' incision and the C-terminal half is responsible for the 5' incision. This chain is UvrABC system protein C, found in Clostridium botulinum (strain ATCC 19397 / Type A).